The sequence spans 105 residues: Guanidinium exporter (105 aa).

The chain crosses the membrane as a helical span at residues 1–21; that stretch reads MSWIILVIAGLLEVVWAVGLK. The Cytoplasmic portion of the chain corresponds to 22–28; the sequence is YTHGFSR. The chain crosses the membrane as a helical span at residues 29 to 49; the sequence is LTPSVITVTAMIVSLALLAWA. Residues 50–57 are Periplasmic-facing; it reads MKSLPVGT. A helical membrane pass occupies residues 58–78; the sequence is AYAVWTGIGAVGAAITGIVLL. Residues 79-81 are Cytoplasmic-facing; that stretch reads GES. Residues 82 to 102 traverse the membrane as a helical segment; the sequence is ANPMRLASLALIVLGIIGLKL. Residues 103-105 are Periplasmic-facing; it reads STH.

Belongs to the drug/metabolite transporter (DMT) superfamily. Small multidrug resistance (SMR) (TC 2.A.7.1) family. Gdx/SugE subfamily.

It is found in the cell inner membrane. Functionally, guanidinium ion exporter. Couples guanidinium export to the proton motive force, exchanging one guanidinium ion for two protons. This is Guanidinium exporter from Escherichia coli O6:H1 (strain CFT073 / ATCC 700928 / UPEC).